Reading from the N-terminus, the 86-residue chain is Small ribosomal subunit protein uS17 (86 aa).

It belongs to the universal ribosomal protein uS17 family. Part of the 30S ribosomal subunit.

Functionally, one of the primary rRNA binding proteins, it binds specifically to the 5'-end of 16S ribosomal RNA. In Bifidobacterium adolescentis (strain ATCC 15703 / DSM 20083 / NCTC 11814 / E194a), this protein is Small ribosomal subunit protein uS17.